Here is a 723-residue protein sequence, read N- to C-terminus: MANFFYSRITNRSYSTKNLLNIEDKGRLKDELEKTRQTNICEICLHPRGHRASVCRQILMGFAYTSKTVLEGLLSTMPHDDAPLGKIFVTDLPPYDEQVPQVLLMQAAALVTSYEYSFEDLAYFLVLPLQMALMQKSPSLGKDFPVISGYSITKDSVHSPVAFGRNLMPRGVSCEFPQIDVLYDYRGFLEGGAFSEGVTSFPKETKKPKVAVIGAGISGLVSATLLLRNGIDDVTIFEAKNVVGGRAHTHFFKGEPSVCAELGAMRFPRSQACLFYLLEYLGINAMTKFPNPGTVDTGLYYRGRSYNWKAHSLPPAIFNRVHKGWRTFLHAGFVDGVAAFASPFTLTECLRLRNYEFASSLWQKWLDAFSSETFSSGIERIFRGAHPPGGEKWTRDVDMELFKELGVGSGGFGPVFGCGFIEILRLIVNGYEDNVMLLLDGIEEIPRRLSQQKVGSYSIRDRIIHKEVKEIIRTESGISLAIGEGMHATFDRVIVTSGFTNIQLRHLLTNDDSFFSYDVNQAIENSHMTGSSKLFVLTQNKFWKAEELPSCILTTGVAKAVYCLDYEPDKPSGKGLVLLSYTWEDDSHKLLTFDKGERFQILKRDLAKSYPRFADLLEPADGDYDNNIIQHDWILDPYAGGAFKLNRRCEDVYSKRLFFQPLRLNGEPDGRVCLAGCSCSFSGGWVEGAIQTACNAAMATIRDAGGLISGDNPLTNEFVNYHY.

Residues S218, E238, R246, and R266 each contribute to the FMN site. A substrate-binding site is contributed by R266.

The protein belongs to the tryptophan 2-monooxygenase family. FMN is required as a cofactor.

The enzyme catalyses L-tryptophan + O2 = indole-3-acetamide + CO2 + H2O. It functions in the pathway plant hormone metabolism; auxin biosynthesis. This Allorhizobium ampelinum (strain ATCC BAA-846 / DSM 112012 / S4) (Agrobacterium vitis (strain S4)) protein is Tryptophan 2-monooxygenase (iaaM).